Consider the following 515-residue polypeptide: Integrator complex subunit 14 (515 aa).

The region spanning 2–204 (PTVVVMDVSL…KNVQSMFGKL (203 aa)) is the VWFA domain. The Mg(2+) site is built by S10, S12, and T86. Position 418 is an N6-acetyllysine (K418).

This sequence belongs to the Integrator subunit 14 family. As to quaternary structure, component of the Integrator complex, composed of core subunits INTS1, INTS2, INTS3, INTS4, INTS5, INTS6, INTS7, INTS8, INTS9/RC74, INTS10, INTS11/CPSF3L, INTS12, INTS13, INTS14 and INTS15. The core complex associates with protein phosphatase 2A subunits PPP2CA and PPP2R1A, to form the Integrator-PP2A (INTAC) complex. INTS14 is part of the tail subcomplex, composed of INTS10, INTS13, INTS14 and INTS15.

The protein resides in the nucleus. Component of the integrator complex, a multiprotein complex that terminates RNA polymerase II (Pol II) transcription in the promoter-proximal region of genes. The integrator complex provides a quality checkpoint during transcription elongation by driving premature transcription termination of transcripts that are unfavorably configured for transcriptional elongation: the complex terminates transcription by (1) catalyzing dephosphorylation of the C-terminal domain (CTD) of Pol II subunit POLR2A/RPB1 and SUPT5H/SPT5, (2) degrading the exiting nascent RNA transcript via endonuclease activity and (3) promoting the release of Pol II from bound DNA. The integrator complex is also involved in terminating the synthesis of non-coding Pol II transcripts, such as enhancer RNAs (eRNAs), small nuclear RNAs (snRNAs), telomerase RNAs and long non-coding RNAs (lncRNAs). Within the integrator complex, INTS14 is part of the integrator tail module that acts as a platform for the recruitment of transcription factors at promoters. The protein is Integrator complex subunit 14 of Rattus norvegicus (Rat).